A 460-amino-acid chain; its full sequence is Bifunctional protein GlmU (460 aa).

A pyrophosphorylase region spans residues 1 to 229 (MKNYAIILAA…FDESLGVNDR (229 aa)). UDP-N-acetyl-alpha-D-glucosamine contacts are provided by residues 8–11 (LAAG), K22, Q72, and 77–78 (GT). D102 is a Mg(2+) binding site. UDP-N-acetyl-alpha-D-glucosamine-binding residues include G139, E154, N169, and N227. N227 is a Mg(2+) binding site. The interval 230–250 (LALAQAEVIMQERINKQHMLN) is linker. Residues 251-460 (GVTLQNPAAT…RLPHHPDQPQ (210 aa)) are N-acetyltransferase. The UDP-N-acetyl-alpha-D-glucosamine site is built by R332 and K350. The active-site Proton acceptor is H362. Positions 365 and 376 each coordinate UDP-N-acetyl-alpha-D-glucosamine. Acetyl-CoA contacts are provided by residues A379, 385-386 (NY), S404, A422, and R439.

It in the N-terminal section; belongs to the N-acetylglucosamine-1-phosphate uridyltransferase family. In the C-terminal section; belongs to the transferase hexapeptide repeat family. In terms of assembly, homotrimer. The cofactor is Mg(2+).

Its subcellular location is the cytoplasm. It carries out the reaction alpha-D-glucosamine 1-phosphate + acetyl-CoA = N-acetyl-alpha-D-glucosamine 1-phosphate + CoA + H(+). The catalysed reaction is N-acetyl-alpha-D-glucosamine 1-phosphate + UTP + H(+) = UDP-N-acetyl-alpha-D-glucosamine + diphosphate. The protein operates within nucleotide-sugar biosynthesis; UDP-N-acetyl-alpha-D-glucosamine biosynthesis; N-acetyl-alpha-D-glucosamine 1-phosphate from alpha-D-glucosamine 6-phosphate (route II): step 2/2. Its pathway is nucleotide-sugar biosynthesis; UDP-N-acetyl-alpha-D-glucosamine biosynthesis; UDP-N-acetyl-alpha-D-glucosamine from N-acetyl-alpha-D-glucosamine 1-phosphate: step 1/1. It functions in the pathway bacterial outer membrane biogenesis; LPS lipid A biosynthesis. Its function is as follows. Catalyzes the last two sequential reactions in the de novo biosynthetic pathway for UDP-N-acetylglucosamine (UDP-GlcNAc). The C-terminal domain catalyzes the transfer of acetyl group from acetyl coenzyme A to glucosamine-1-phosphate (GlcN-1-P) to produce N-acetylglucosamine-1-phosphate (GlcNAc-1-P), which is converted into UDP-GlcNAc by the transfer of uridine 5-monophosphate (from uridine 5-triphosphate), a reaction catalyzed by the N-terminal domain. This is Bifunctional protein GlmU from Streptococcus equi subsp. zooepidemicus (strain ATCC 35246 / C74-63).